The chain runs to 128 residues: Kinetoplast-associated protein 4 (128 aa).

Residues 1 to 10 constitute a propeptide that is removed on maturation; that stretch reads MLRFVPRRLA. The segment at 60-87 is disordered; the sequence is AHPGFKRKEKEPKELKAAKAAKTSTPRA. Residues 65-76 are compositionally biased toward basic and acidic residues; the sequence is KRKEKEPKELKA.

The protein belongs to the KAP family. In terms of assembly, associates with the kinetoplast DNA network.

It is found in the mitochondrion matrix. Its subcellular location is the kinetoplast. In terms of biological role, histone H1-like DNA-binding protein involved in the organization and segregation of kinetoplast DNA (kDNA). The mitochondrial DNA of kinetoplastid protozoa consists of about 5,000 minicircles and 20 to 30 maxicircles. These circular DNAs are held together by catenation into a highly organized compact disk structure referred to as a kinetoplast DNA (kDNA) network. Binds preferentially to a specific fragment of minicircle DNA and is able to compact kDNA networks through DNA charge neutralization and condensation. The chain is Kinetoplast-associated protein 4 (KAP4) from Crithidia fasciculata.